A 66-amino-acid polypeptide reads, in one-letter code: Large ribosomal subunit protein bL33c (66 aa).

The protein belongs to the bacterial ribosomal protein bL33 family.

It localises to the plastid. Its subcellular location is the chloroplast. The sequence is that of Large ribosomal subunit protein bL33c from Drimys granadensis.